Here is a 296-residue protein sequence, read N- to C-terminus: Nucleotide-binding protein spyM18_0713 (296 aa).

Position 13–20 (13–20 (GMSGAGKT)) interacts with ATP. Residue 63 to 66 (DMRS) coordinates GTP.

It belongs to the RapZ-like family.

In terms of biological role, displays ATPase and GTPase activities. In Streptococcus pyogenes serotype M18 (strain MGAS8232), this protein is Nucleotide-binding protein spyM18_0713.